Consider the following 867-residue polypeptide: Putative tyrosine-protein kinase F09A5.2 (867 aa).

Transmembrane regions (helical) follow at residues 45–65 (VMKI…FATS) and 355–375 (LLLI…AFFV). 2 N-linked (GlcNAc...) asparagine glycosylation sites follow: asparagine 395 and asparagine 423. The Protein kinase domain occupies 467 to 757 (VQEDHLLGNG…FNEMRGEITV (291 aa)). Residue 473–481 (LGNGAFANV) coordinates ATP. N-linked (GlcNAc...) asparagine glycosylation is found at asparagine 496 and asparagine 500. An ATP-binding site is contributed by lysine 516. N-linked (GlcNAc...) asparagine glycosylation occurs at asparagine 585. Aspartate 626 serves as the catalytic Proton acceptor. Disordered regions lie at residues 782-821 (LTMQ…GTCA) and 848-867 (SKSM…TYQS). Acidic residues predominate over residues 801–810 (DMDEDGDYDS). Residues 858–867 (SNSTVSTYQS) are compositionally biased toward polar residues. The N-linked (GlcNAc...) asparagine glycan is linked to asparagine 859.

The protein belongs to the protein kinase superfamily. Tyr protein kinase family.

It is found in the membrane. It carries out the reaction L-tyrosyl-[protein] + ATP = O-phospho-L-tyrosyl-[protein] + ADP + H(+). This chain is Putative tyrosine-protein kinase F09A5.2, found in Caenorhabditis elegans.